Reading from the N-terminus, the 316-residue chain is Retron Ec73 reverse transcriptase (316 aa).

A Reverse transcriptase domain is found at 1-243 (MRIYSLIDSQ…GSIVVTGLKV (243 aa)). Residues aspartate 99, aspartate 189, and aspartate 190 each coordinate Mg(2+). The segment at 247–316 (FHITLHRSMK…WIQNLHNKVE (70 aa)) is necessary and required for recognition and binding of RNA.

The protein belongs to the bacterial reverse transcriptase family.

The catalysed reaction is DNA(n) + a 2'-deoxyribonucleoside 5'-triphosphate = DNA(n+1) + diphosphate. Its function is as follows. Reverse transcriptase (RT) component of antiviral defense system retron Ec73, composed of a non-coding RNA (ncRNA) followed by a ribosyltransferase/DNA-binding protein then a reverse transcriptase (RT). Expression of this retron confers protection against bacteriophages SECphi4, SECphi6, SECphi27 and P1. At multiplicity of infection (MOI) of 0.02 cultures grow normally when infected with SECphi4 without collapsing, at MOI 2 cultures enter growth stasis. Responsible for synthesis of msDNA-Ec73 (a branched molecule with RNA linked by a 2',5'-phosphodiester bond to ssDNA). The retron transcript serves as primer (from a conserved internal G residue) and template for the reaction, and codes for the RT. Recognizes only its cognate RNA as a primer template. The sequence is that of Retron Ec73 reverse transcriptase from Escherichia coli.